A 355-amino-acid polypeptide reads, in one-letter code: Peptide chain release factor 1 (355 aa).

At Gln-233 the chain carries N5-methylglutamine.

The protein belongs to the prokaryotic/mitochondrial release factor family. In terms of processing, methylated by PrmC. Methylation increases the termination efficiency of RF1.

It is found in the cytoplasm. In terms of biological role, peptide chain release factor 1 directs the termination of translation in response to the peptide chain termination codons UAG and UAA. This Rickettsia typhi (strain ATCC VR-144 / Wilmington) protein is Peptide chain release factor 1.